We begin with the raw amino-acid sequence, 172 residues long: Small t antigen (172 aa).

At Met1 the chain carries N-acetylmethionine; by host. The J domain maps to 12-75 (ELMDLLGLER…VKVAHQPDFG (64 aa)). The C4-type; atypical zinc-finger motif lies at 101–114 (CATKPSAHCPCMLC). An H1C3-type; atypical zinc finger spans residues 120 to 141 (HVYRKFLRRDPLVWIDCYCFDC).

In terms of assembly, interacts with host PPP2R1A; the interaction inhibits PP2A activity.

The protein resides in the host cytoplasm. It localises to the host nucleus. In terms of biological role, promotes efficient viral genome replication by accelerating both G1 and S phase progression of the cell cycle. Inhibits host PP2A by binding to the A subunit, thereby displacing lower affinity regulatory B subunit. Inactivation of PP2A in turn results in the transactivation of cyclin A and cyclin D1 promoters. Late during the infection cycle, ST may induce dephosphorylation of host MTOR, leading to the inhibition of cap-dependent translation. May establish and maintain high levels of viral genomes during persistent infection in cell culture. The sequence is that of Small t antigen from Simian virus 12 (strain wt100) (SV-12).